The primary structure comprises 450 residues: Probable glucoamylase (450 aa).

The first 16 residues, 1–16 (MRTYWLFLLLGGVVSA), serve as a signal peptide directing secretion. A propeptide spanning residues 17–28 (ESLLSPNKRSKE) is cleaved from the precursor. Tryptophan 147 contacts substrate. Residue aspartate 203 is the Proton acceptor of the active site. Glutamate 206 functions as the Proton donor in the catalytic mechanism. N-linked (GlcNAc...) asparagine glycans are attached at residues asparagine 383 and asparagine 409.

Belongs to the glycosyl hydrolase 15 family.

It catalyses the reaction Hydrolysis of terminal (1-&gt;4)-linked alpha-D-glucose residues successively from non-reducing ends of the chains with release of beta-D-glucose.. The polypeptide is Probable glucoamylase (meu17) (Schizosaccharomyces pombe (strain 972 / ATCC 24843) (Fission yeast)).